Here is a 387-residue protein sequence, read N- to C-terminus: Protein mab-21-like 3 (387 aa).

This sequence belongs to the mab-21 family.

The chain is Protein mab-21-like 3 (mab21L3) from Danio rerio (Zebrafish).